Here is a 198-residue protein sequence, read N- to C-terminus: Glycerol-3-phosphate acyltransferase (198 aa).

Helical transmembrane passes span 5–25, 114–134, and 154–176; these read AVIL…GYLI, VLIM…IAVL, and AFAL…LVAV.

The protein belongs to the PlsY family. Probably interacts with PlsX.

The protein localises to the cell membrane. It carries out the reaction an acyl phosphate + sn-glycerol 3-phosphate = a 1-acyl-sn-glycero-3-phosphate + phosphate. It participates in lipid metabolism; phospholipid metabolism. Its function is as follows. Catalyzes the transfer of an acyl group from acyl-phosphate (acyl-PO(4)) to glycerol-3-phosphate (G3P) to form lysophosphatidic acid (LPA). This enzyme utilizes acyl-phosphate as fatty acyl donor, but not acyl-CoA or acyl-ACP. This Desulforudis audaxviator (strain MP104C) protein is Glycerol-3-phosphate acyltransferase.